The sequence spans 215 residues: Intraflagellar transport protein 43 homolog B (215 aa).

Residues 1-107 (MDDHLKLGDS…SDGEGDIPVI (107 aa)) form a disordered region.

The protein belongs to the IFT43 family. Component of IFT complex A.

Its function is as follows. Component of IFT complex A (IFT-A) involved in retrograde ciliary transport along microtubules from the ciliary tip to the base. The sequence is that of Intraflagellar transport protein 43 homolog B (ift43b) from Salmo salar (Atlantic salmon).